The chain runs to 242 residues: uncharacterized protein (242 aa).

Disordered stretches follow at residues 16-121 (GLYK…GAMA) and 152-178 (PVRP…TQPV). Composition is skewed to pro residues over residues 50 to 64 (PRPP…PSPA) and 97 to 113 (EPRP…PPGP). Basic residues predominate over residues 157–172 (KLPKGKGRLRRPRQSR). Threonine 175 bears the Phosphothreonine mark. Phosphoserine is present on residues serine 192, serine 206, serine 216, serine 232, and serine 238. Residues 215 to 242 (QSLSLQREPLGSCKLRNSLDSSDSDSAL) are disordered. Low complexity predominate over residues 232-242 (SLDSSDSDSAL).

It is found in the cytoplasm. This is an uncharacterized protein from Rattus norvegicus (Rat).